Consider the following 1107-residue polypeptide: Dynein axonemal assembly factor 1 homolog (1107 aa).

LRR repeat units follow at residues 34-56 (HLND…EEYV), 57-78 (GLKC…EYQT), 79-100 (ELKC…DSCK), 101-122 (QLDT…GHDI), 125-146 (VLNT…DHLR), and 150-171 (FVSV…KILG). Residues 184–223 (NPVVNEIPSYRKTLILECKNLTYLDTRPVFDRDRACAEAW) enclose the LRRCT domain. Disordered stretches follow at residues 258-281 (HRGD…KASK), 428-487 (NESP…TLNV), 500-608 (ESKD…LEKE), 780-810 (KEEP…EHEQ), 834-855 (SSED…AEED), and 1070-1107 (AAHA…DNCD). Positions 428–437 (NESPLTSPSF) are enriched in polar residues. Residues 446–459 (EEIEPTDVEEEQQI) show a composition bias toward acidic residues. Over residues 500–512 (ESKDGELISKVES) the composition is skewed to basic and acidic residues. A compositionally biased stretch (acidic residues) spans 531 to 544 (DNSESEPTDITNED). Residues 549-560 (SSSVSVTSSTDS) are compositionally biased toward low complexity. Residues 581–597 (NYRQDSTTSTDSENEVS) show a composition bias toward polar residues. The span at 801–810 (LEVHSSEHEQ) shows a compositional bias: basic and acidic residues. Over residues 844-855 (DSSESSDSAEED) the composition is skewed to acidic residues. Residues 1083-1097 (VESKPVEIDGTKEET) show a composition bias toward basic and acidic residues. A compositionally biased stretch (acidic residues) spans 1098–1107 (VDSELADNCD).

It belongs to the DNAAF1 family.

It is found in the cell projection. It localises to the cilium. Cilium-specific protein required for cilia structures. The protein is Dynein axonemal assembly factor 1 homolog of Aedes aegypti (Yellowfever mosquito).